The chain runs to 66 residues: UPF0337 protein pc0632 (66 aa).

It belongs to the UPF0337 (CsbD) family.

This is UPF0337 protein pc0632 from Protochlamydia amoebophila (strain UWE25).